The sequence spans 239 residues: 1-(5-phosphoribosyl)-5-[(5-phosphoribosylamino)methylideneamino] imidazole-4-carboxamide isomerase (239 aa).

Aspartate 8 acts as the Proton acceptor in catalysis. The Proton donor role is filled by aspartate 129.

It belongs to the HisA/HisF family.

Its subcellular location is the cytoplasm. It carries out the reaction 1-(5-phospho-beta-D-ribosyl)-5-[(5-phospho-beta-D-ribosylamino)methylideneamino]imidazole-4-carboxamide = 5-[(5-phospho-1-deoxy-D-ribulos-1-ylimino)methylamino]-1-(5-phospho-beta-D-ribosyl)imidazole-4-carboxamide. It functions in the pathway amino-acid biosynthesis; L-histidine biosynthesis; L-histidine from 5-phospho-alpha-D-ribose 1-diphosphate: step 4/9. This chain is 1-(5-phosphoribosyl)-5-[(5-phosphoribosylamino)methylideneamino] imidazole-4-carboxamide isomerase, found in Bacillus cereus (strain Q1).